We begin with the raw amino-acid sequence, 434 residues long: Enolase (434 aa).

(2R)-2-phosphoglycerate is bound at residue Gln-163. Catalysis depends on Glu-205, which acts as the Proton donor. Mg(2+)-binding residues include Asp-242, Glu-289, and Asp-316. Residues Lys-341, Arg-370, Ser-371, and Lys-392 each coordinate (2R)-2-phosphoglycerate. Lys-341 (proton acceptor) is an active-site residue.

The protein belongs to the enolase family. Requires Mg(2+) as cofactor.

The protein localises to the cytoplasm. It localises to the secreted. Its subcellular location is the cell surface. It catalyses the reaction (2R)-2-phosphoglycerate = phosphoenolpyruvate + H2O. The protein operates within carbohydrate degradation; glycolysis; pyruvate from D-glyceraldehyde 3-phosphate: step 4/5. Functionally, catalyzes the reversible conversion of 2-phosphoglycerate (2-PG) into phosphoenolpyruvate (PEP). It is essential for the degradation of carbohydrates via glycolysis. The chain is Enolase from Lacticaseibacillus paracasei (strain ATCC 334 / BCRC 17002 / CCUG 31169 / CIP 107868 / KCTC 3260 / NRRL B-441) (Lactobacillus paracasei).